A 91-amino-acid polypeptide reads, in one-letter code: Probable Fe(2+)-trafficking protein (91 aa).

It belongs to the Fe(2+)-trafficking protein family.

Functionally, could be a mediator in iron transactions between iron acquisition and iron-requiring processes, such as synthesis and/or repair of Fe-S clusters in biosynthetic enzymes. The protein is Probable Fe(2+)-trafficking protein of Paraburkholderia phymatum (strain DSM 17167 / CIP 108236 / LMG 21445 / STM815) (Burkholderia phymatum).